A 259-amino-acid chain; its full sequence is Probable 6-phosphogluconolactonase 2 (259 aa).

Belongs to the glucosamine/galactosamine-6-phosphate isomerase family. 6-phosphogluconolactonase subfamily.

The protein resides in the cytoplasm. The protein localises to the cytosol. The catalysed reaction is 6-phospho-D-glucono-1,5-lactone + H2O = 6-phospho-D-gluconate + H(+). Its pathway is carbohydrate degradation; pentose phosphate pathway; D-ribulose 5-phosphate from D-glucose 6-phosphate (oxidative stage): step 2/3. Functionally, catalyzes the hydrolysis of 6-phosphogluconolactone to 6-phosphogluconate. In Arabidopsis thaliana (Mouse-ear cress), this protein is Probable 6-phosphogluconolactonase 2.